We begin with the raw amino-acid sequence, 333 residues long: Lipoyl synthase (333 aa).

Over residues 1–15 (MSTLVESPVPSNDSQ) the composition is skewed to polar residues. The disordered stretch occupies residues 1-34 (MSTLVESPVPSNDSQAAAPAAYDPTQKQKSQAKT). Positions 80, 85, 91, 106, 110, 113, and 320 each coordinate [4Fe-4S] cluster. A Radical SAM core domain is found at 91–309 (CFGKGTATFM…EREAYAMGFT (219 aa)).

This sequence belongs to the radical SAM superfamily. Lipoyl synthase family. It depends on [4Fe-4S] cluster as a cofactor.

The protein resides in the cytoplasm. It catalyses the reaction [[Fe-S] cluster scaffold protein carrying a second [4Fe-4S](2+) cluster] + N(6)-octanoyl-L-lysyl-[protein] + 2 oxidized [2Fe-2S]-[ferredoxin] + 2 S-adenosyl-L-methionine + 4 H(+) = [[Fe-S] cluster scaffold protein] + N(6)-[(R)-dihydrolipoyl]-L-lysyl-[protein] + 4 Fe(3+) + 2 hydrogen sulfide + 2 5'-deoxyadenosine + 2 L-methionine + 2 reduced [2Fe-2S]-[ferredoxin]. The protein operates within protein modification; protein lipoylation via endogenous pathway; protein N(6)-(lipoyl)lysine from octanoyl-[acyl-carrier-protein]: step 2/2. Catalyzes the radical-mediated insertion of two sulfur atoms into the C-6 and C-8 positions of the octanoyl moiety bound to the lipoyl domains of lipoate-dependent enzymes, thereby converting the octanoylated domains into lipoylated derivatives. In Bordetella bronchiseptica (strain ATCC BAA-588 / NCTC 13252 / RB50) (Alcaligenes bronchisepticus), this protein is Lipoyl synthase.